A 963-amino-acid polypeptide reads, in one-letter code: Pyruvate, phosphate dikinase 1, chloroplastic (963 aa).

The N-terminal 76 residues, 1–76, are a transit peptide targeting the chloroplast; it reads MLYIRKKMTS…GLHRETKARA (76 aa). Threonine 543 carries the phosphothreonine; by PDRP1 modification. The active-site Tele-phosphohistidine intermediate is the histidine 545. Substrate-binding residues include arginine 651, arginine 707, glutamate 836, glycine 857, threonine 858, asparagine 859, and aspartate 860. Glutamate 836 contacts Mg(2+). Aspartate 860 is a Mg(2+) binding site. Cysteine 922 functions as the Proton donor in the catalytic mechanism.

The protein belongs to the PEP-utilizing enzyme family. As to quaternary structure, homotetramer. Interacts with RP1 and RP2. Requires Mg(2+) as cofactor. Post-translationally, phosphorylation of Thr-543 in the dark inactivates the enzyme. Dephosphorylation upon light stimulation reactivates the enzyme. In terms of tissue distribution, isoform 1 is expressed in leaves, flowers and siliques. Isoform 2 is found in cotyledons, rosette and cauline leaves, petioles, flowers and siliques.

The protein localises to the plastid. It localises to the chloroplast. The protein resides in the cytoplasm. It catalyses the reaction pyruvate + phosphate + ATP = phosphoenolpyruvate + AMP + diphosphate + H(+). Its activity is regulated as follows. Activated by light-induced dephosphorylation. Inhibited by dark-induced phosphorylation. Both reactions are catalyzed by PDRP1. Its function is as follows. Formation of phosphoenolpyruvate. May be involved in regulating the flux of carbon into starch and fatty acids of seeds and in the remobilization of nitrogen reserves in senescing leaves. In Arabidopsis thaliana (Mouse-ear cress), this protein is Pyruvate, phosphate dikinase 1, chloroplastic (PPDK).